We begin with the raw amino-acid sequence, 497 residues long: Cytochrome P450 monooxygenase 151 (497 aa).

A helical membrane pass occupies residues 1-21; it reads MTDLVPVYYAFAGVVAALLFY. N292 and N397 each carry an N-linked (GlcNAc...) asparagine glycan. A heme-binding site is contributed by C441.

This sequence belongs to the cytochrome P450 family. The cofactor is heme.

It localises to the membrane. Its pathway is secondary metabolite biosynthesis. Functionally, cytochrome P450 monooxygenase that is able to use dehydroabietic acid and testosterone as substrates for oxidation, suggesting that the natural substrate(s) may be structurally related to steroid compounds. This is Cytochrome P450 monooxygenase 151 from Postia placenta (strain ATCC 44394 / Madison 698-R) (Brown rot fungus).